A 166-amino-acid chain; its full sequence is Ribonuclease H (166 aa).

An RNase H type-1 domain is found at 5 to 147 (PRKRVALFTD…VDREARRQAQ (143 aa)). The Mg(2+) site is built by D14, E52, D74, and D139. A disordered region spans residues 128–166 (GHTGHPENERVDREARRQAQSQAKTPCPPRAPTLFHEEA). Positions 131–144 (GHPENERVDREARR) are enriched in basic and acidic residues.

This sequence belongs to the RNase H family. As to quaternary structure, monomer. Mg(2+) serves as cofactor.

It carries out the reaction Endonucleolytic cleavage to 5'-phosphomonoester.. Endonuclease that specifically degrades the RNA of RNA-DNA hybrids. The protein is Ribonuclease H (rnhA) of Thermus thermophilus (strain ATCC 27634 / DSM 579 / HB8).